A 301-amino-acid polypeptide reads, in one-letter code: Glycine--tRNA ligase alpha subunit (301 aa).

Belongs to the class-II aminoacyl-tRNA synthetase family. In terms of assembly, tetramer of two alpha and two beta subunits.

The protein resides in the cytoplasm. The catalysed reaction is tRNA(Gly) + glycine + ATP = glycyl-tRNA(Gly) + AMP + diphosphate. The polypeptide is Glycine--tRNA ligase alpha subunit (Nitrosospira multiformis (strain ATCC 25196 / NCIMB 11849 / C 71)).